A 214-amino-acid chain; its full sequence is Phosphatidyl-N-methylethanolamine N-methyltransferase (214 aa).

Residues 1–19 (MPLVALGVADLFNFVDYSK) lie on the Lumenal side of the membrane. Residues 20 to 40 (TSLAISAAAIAFNPTFWNIVA) constitute an intramembrane region (helical). Topologically, residues 41–52 (RREYRTKFLTRA) are lumenal. A helical membrane pass occupies residues 53–74 (FGGNAQVACYFLAVTIFGLGLV). At 75–101 (RDFLYERALRDQPSHPLLEGTYVKYAA) the chain is on the cytoplasmic side. The helical transmembrane segment at 102–122 (YALLALGNLLVITSTMRLGIT) threads the bilayer. 106–108 (ALG) is a binding site for S-adenosyl-L-methionine. Over 123-165 (GTFLGDYFGILMDGIVTGFPFNVTSAPMYYGSTMSFLGTALLY) the chain is Lumenal. Residues 166–186 (GKPAGLLLTAWVLFVYIIAIQ) form a helical membrane-spanning segment. The Cytoplasmic segment spans residues 187-214 (FENPFTAEIYAKRDRERAKAAGTSKKEL). 188–189 (EN) lines the S-adenosyl-L-methionine pocket.

This sequence belongs to the class VI-like SAM-binding methyltransferase superfamily. PEMT/PEM2 methyltransferase family.

It is found in the endoplasmic reticulum membrane. The protein localises to the mitochondrion membrane. It carries out the reaction a 1,2-diacyl-sn-glycero-3-phospho-N-methylethanolamine + S-adenosyl-L-methionine = a 1,2-diacyl-sn-glycero-3-phospho-N,N-dimethylethanolamine + S-adenosyl-L-homocysteine + H(+). The enzyme catalyses a 1,2-diacyl-sn-glycero-3-phospho-N,N-dimethylethanolamine + S-adenosyl-L-methionine = a 1,2-diacyl-sn-glycero-3-phosphocholine + S-adenosyl-L-homocysteine + H(+). It participates in phospholipid metabolism; phosphatidylcholine biosynthesis. Its function is as follows. Catalyzes the second two steps of the methylation pathway of phosphatidylcholine biosynthesis, the SAM-dependent methylation of phosphatidylmonomethylethanolamine (PMME) to phosphatidyldimethylethanolamine (PDME) and of PDME to phosphatidylcholine (PC). The polypeptide is Phosphatidyl-N-methylethanolamine N-methyltransferase (Neurospora crassa (strain ATCC 24698 / 74-OR23-1A / CBS 708.71 / DSM 1257 / FGSC 987)).